We begin with the raw amino-acid sequence, 91 residues long: PqqA binding protein (91 aa).

Belongs to the PqqD family. Monomer. Interacts with PqqE.

It participates in cofactor biosynthesis; pyrroloquinoline quinone biosynthesis. Functionally, functions as a PqqA binding protein and presents PqqA to PqqE, in the pyrroloquinoline quinone (PQQ) biosynthetic pathway. The chain is PqqA binding protein from Pseudomonas fluorescens (strain ATCC BAA-477 / NRRL B-23932 / Pf-5).